Here is a 326-residue protein sequence, read N- to C-terminus: Olfactory receptor 11H1 (326 aa).

At 1 to 44 (MCPLTLQVTGLMNVSEPNSSFAFVNEFILQGFSCEWTIQIFLFS) the chain is on the extracellular side. N-linked (GlcNAc...) asparagine glycans are attached at residues asparagine 13 and asparagine 18. Residues 45–65 (LFTTTYALTITGNGAIAFVLW) traverse the membrane as a helical segment. Residues 66 to 72 (CDRRLHT) lie on the Cytoplasmic side of the membrane. A helical membrane pass occupies residues 73–93 (PMYMFLGNFSFLEIWYVSSTV). Residues 94 to 112 (PKMLVNFLSEKKNISFAGC) lie on the Extracellular side of the membrane. Asparagine 106 carries N-linked (GlcNAc...) asparagine glycosylation. A disulfide bridge links cysteine 112 with cysteine 194. Residues 113-133 (FLQFYFFFSLGTSECLLLTVM) traverse the membrane as a helical segment. The Cytoplasmic segment spans residues 134–158 (AFDQYLAICRPLLYPNIMTGHLYAK). The helical transmembrane segment at 159 to 179 (LVILCWVCGFLWFLIPIVLIS) threads the bilayer. The Extracellular segment spans residues 180-216 (QMPFCGPNIIDHVVCDPGPRFALDCVSAPRIQLFCYT). The helical transmembrane segment at 217 to 237 (LSSLVIFGNFLFIIGSYTLVL) threads the bilayer. The Cytoplasmic portion of the chain corresponds to 238-259 (KAMLGMPSSTGRHKAFSTCGSH). The helical transmembrane segment at 260–280 (LAVVSLCYSSLMVMYVSPGLG) threads the bilayer. The Extracellular segment spans residues 281–287 (HSTGMQK). Residues 288–308 (IETLFYAMVTPLFNPLIYSLQ) form a helical membrane-spanning segment. Residues 309 to 326 (NKEIKAALRKVLGSSNII) lie on the Cytoplasmic side of the membrane.

The protein belongs to the G-protein coupled receptor 1 family.

Its subcellular location is the cell membrane. In terms of biological role, odorant receptor. In Homo sapiens (Human), this protein is Olfactory receptor 11H1 (OR11H1).